The following is a 1021-amino-acid chain: Sodium/potassium-transporting ATPase subunit alpha-1 (1021 aa).

The propeptide occupies 1 to 5 (MGKGA). The segment covering 1–11 (MGKGAGRDKYE) has biased composition (basic and acidic residues). Positions 1–31 (MGKGAGRDKYEPTATSEHGTKKKKAKERDMD) are disordered. Residues 6–85 (GRDKYEPTAT…NTLTPPPTTP (80 aa)) lie on the Cytoplasmic side of the membrane. Residue Tyr10 is modified to Phosphotyrosine. The residue at position 16 (Ser16) is a Phosphoserine; by PKC. Positions 80 to 82 (PPP) are phosphoinositide-3 kinase binding. Residues 86–106 (EWVKFCRQLFGGFSLLLWIGS) traverse the membrane as a helical segment. Over 107–129 (LLCFLAYGITSVMEGEPNSDNLY) the chain is Extracellular. A helical transmembrane segment spans residues 130–150 (LGVVLAAVVIITGCFSYYQEA). Topologically, residues 151–286 (KSSKIMESFK…GGKTPIAMEI (136 aa)) are cytoplasmic. The disordered stretch occupies residues 214-233 (SSLTGESEPQTRSPDFSNEN). A helical membrane pass occupies residues 287–306 (EHFIHLITGVAVFLGVSFFI). Over 307–318 (LSLILEYTWLEA) the chain is Extracellular. A helical membrane pass occupies residues 319–336 (VIFLIGIIVANVPEGLLA). Topologically, residues 337 to 770 (TVTVCLTLTA…EEGRLIFDNL (434 aa)) are cytoplasmic. Asp374 acts as the 4-aspartylphosphate intermediate in catalysis. Lys485 contributes to the ATP binding site. Asp715 and Asp719 together coordinate Mg(2+). The helical transmembrane segment at 771 to 790 (KKSIAYTLTSNIPEITPFLI) threads the bilayer. The Extracellular segment spans residues 791–800 (FIIANIPLPL). The chain crosses the membrane as a helical span at residues 801 to 821 (GTCTILCIDLGTDMVPAISLA). At 822 to 841 (YEQAESDIMKRQPRNPKTDK) the chain is on the cytoplasmic side. The helical transmembrane segment at 842–864 (LVNERLISMAYGQIGMIQALGGF) threads the bilayer. The Extracellular portion of the chain corresponds to 865-916 (FTYFVIMAENGFLPSGLVGIRLQWDDRWINDVEDSYGQQWTFEQRKIVEFTC). Residues 917–936 (HTAFFVSIVVVQWADLIICK) form a helical membrane-spanning segment. The Cytoplasmic segment spans residues 937–949 (TRRNSVFQQGMKN). Ser941 carries the phosphoserine; by PKA modification. A helical transmembrane segment spans residues 950–968 (KILIFGLFEETALAAFLSY). Over 969 to 983 (CPGMDVALRMYPLKP) the chain is Extracellular. Residues 984–1004 (TWWFCAFPYSLLIFLYDEIRK) traverse the membrane as a helical segment. Over 1005–1021 (LIIRRNPGGWVERETYY) the chain is Cytoplasmic.

This sequence belongs to the cation transport ATPase (P-type) (TC 3.A.3) family. Type IIC subfamily. The sodium/potassium-transporting ATPase is composed of a catalytic alpha subunit, an auxiliary non-catalytic beta subunit and an additional regulatory subunit. In terms of processing, phosphorylation on Tyr-10 modulates pumping activity.

The protein localises to the cell membrane. Its subcellular location is the sarcolemma. The enzyme catalyses K(+)(out) + Na(+)(in) + ATP + H2O = K(+)(in) + Na(+)(out) + ADP + phosphate + H(+). Functionally, this is the catalytic component of the active enzyme, which catalyzes the hydrolysis of ATP coupled with the exchange of sodium and potassium ions across the plasma membrane. This action creates the electrochemical gradient of sodium and potassium ions, providing the energy for active transport of various nutrients. The protein is Sodium/potassium-transporting ATPase subunit alpha-1 (ATP1A1) of Gallus gallus (Chicken).